The sequence spans 249 residues: Probable transcriptional regulatory protein GOX1679 (249 aa).

This sequence belongs to the TACO1 family.

The protein resides in the cytoplasm. The chain is Probable transcriptional regulatory protein GOX1679 from Gluconobacter oxydans (strain 621H) (Gluconobacter suboxydans).